We begin with the raw amino-acid sequence, 532 residues long: Flavin-containing monooxygenase 1 (532 aa).

At 1-510 (MVKRVAIVGA…TRTVQETPST (510 aa)) the chain is on the lumenal side. Residues 9-13 (GAGVS), Glu32, 40-41 (LW), and 61-62 (NS) contribute to the FAD site. NADP(+) is bound by residues 60 to 61 (SN) and 195 to 198 (SGTD). Residues 511 to 531 (FETLLKLFSFLALLVAVFFIF) form a helical membrane-spanning segment. Leu532 is a topological domain (cytoplasmic).

This sequence belongs to the FMO family. Requires FAD as cofactor. As to expression, expressed in liver, lung and kidney and to a lesser extent in the heart and brain.

It localises to the endoplasmic reticulum membrane. It carries out the reaction hypotaurine + NADPH + O2 + H(+) = taurine + NADP(+) + H2O. It catalyses the reaction hypotaurine + NADH + O2 + H(+) = taurine + NAD(+) + H2O. The enzyme catalyses trimethylamine + NADPH + O2 = trimethylamine N-oxide + NADP(+) + H2O. The catalysed reaction is N,N-dimethylaniline + NADPH + O2 + H(+) = N,N-dimethylaniline N-oxide + NADP(+) + H2O. In terms of biological role, broad spectrum monooxygenase that catalyzes the oxygenation of a wide variety of nitrogen- and sulfur-containing compounds including xenobiotics. Catalyzes the S-oxygenation of hypotaurine to produce taurine, an organic osmolyte involved in cell volume regulation as well as a variety of cytoprotective and developmental processes. In vitro, catalyzes the N-oxygenation of trimethylamine (TMA) to produce trimethylamine N-oxide (TMAO) and could therefore participate to the detoxification of this compound that is generated by the action of gut microbiota from dietary precursors such as choline, choline containing compounds, betaine or L-carnitine. In Rattus norvegicus (Rat), this protein is Flavin-containing monooxygenase 1.